We begin with the raw amino-acid sequence, 203 residues long: Outer-membrane lipoprotein carrier protein (203 aa).

An N-terminal signal peptide occupies residues 1-21 (MKKLLVACCLLSGLISAHALA).

This sequence belongs to the LolA family. As to quaternary structure, monomer.

The protein localises to the periplasm. Functionally, participates in the translocation of lipoproteins from the inner membrane to the outer membrane. Only forms a complex with a lipoprotein if the residue after the N-terminal Cys is not an aspartate (The Asp acts as a targeting signal to indicate that the lipoprotein should stay in the inner membrane). In Yersinia enterocolitica serotype O:8 / biotype 1B (strain NCTC 13174 / 8081), this protein is Outer-membrane lipoprotein carrier protein.